We begin with the raw amino-acid sequence, 78 residues long: Defensin-like protein 281 (78 aa).

The signal sequence occupies residues 1-23 (MASTKYLVLLFICLSVLLTPGLG). Intrachain disulfides connect Cys-37-Cys-60, Cys-46-Cys-72, and Cys-50-Cys-74.

The protein belongs to the DEFL family.

It is found in the secreted. The polypeptide is Defensin-like protein 281 (Arabidopsis thaliana (Mouse-ear cress)).